The following is a 408-amino-acid chain: Phosphoglycerate kinase (408 aa).

Residues 24-26 (DLN), arginine 39, 62-65 (HLGR), arginine 121, and arginine 161 each bind substrate. ATP-binding positions include lysine 211, glycine 307, glutamate 338, and 364-367 (GGDS).

This sequence belongs to the phosphoglycerate kinase family. In terms of assembly, monomer.

Its subcellular location is the cytoplasm. The catalysed reaction is (2R)-3-phosphoglycerate + ATP = (2R)-3-phospho-glyceroyl phosphate + ADP. Its pathway is carbohydrate degradation; glycolysis; pyruvate from D-glyceraldehyde 3-phosphate: step 2/5. The chain is Phosphoglycerate kinase from Arthrobacter sp. (strain FB24).